Reading from the N-terminus, the 90-residue chain is Putative defensin-like protein 64 (90 aa).

An N-terminal signal peptide occupies residues 1–23 (MWGRQIVLKIFFLVLSCVIVIET). 2 disulfides stabilise this stretch: Cys-33/Cys-56 and Cys-42/Cys-77.

This sequence belongs to the DEFL family.

It localises to the secreted. The sequence is that of Putative defensin-like protein 64 from Arabidopsis thaliana (Mouse-ear cress).